The primary structure comprises 541 residues: Zinc finger protein 513 (541 aa).

Residues 1-118 (MPRRKQSHPQ…GEARGERPGP (118 aa)) are disordered. The segment covering 44-55 (LEFEEEEEEDEG) has biased composition (acidic residues). Phosphoserine is present on residues S85 and S96. Positions 103–115 (EPARGPGEARGER) are enriched in basic and acidic residues. 8 C2H2-type zinc fingers span residues 150 to 172 (YSCRLCAFVSHYSSHLKRHMQTH), 178 to 200 (FRCGRCPYASAQLVNLTRHTRTH), 206 to 228 (YRCPHCPFACSSLGNLRRHQRTH), 360 to 382 (FACSLCPFATHYPNHLARHMKTH), 388 to 410 (FRCARCPYASAHLDNLKRHQRVH), 416 to 438 (YKCPLCPYACGNLANLKRHGRIH), 444 to 466 (FRCSLCNYSCNQSMNLKRHMLRH), and 472 to 494 (FRCATCAYTTGHWDNYKRHQKVH). Residues 492 to 541 (KVHGHGGAGGPGLSAPEGWAPPHSPPSVLSTRGPAALGATGSRALHSDSP) are disordered.

The protein belongs to the krueppel C2H2-type zinc-finger protein family. In terms of assembly, binds DNA. Can associate with the proximal promoter regions of PAX6 and SP4, and their known targets including ARR3, RHO, OPN1MW2 and OPN1SW. Widely expressed. In the eye, expression is greatest in the retina and least in the lens and cornea.

Its subcellular location is the nucleus. Functionally, transcriptional regulator that plays a role in retinal development and maintenance. This chain is Zinc finger protein 513 (Znf513), found in Mus musculus (Mouse).